The primary structure comprises 70 residues: Protein FlmC homolog (70 aa).

Residues 1-21 (MSSPHQDSLLPRFAQGEEGHE) are disordered.

This chain is Protein FlmC homolog, found in Escherichia coli.